The following is a 1543-amino-acid chain: DNA-directed RNA polymerase subunit beta' (1543 aa).

Residues cysteine 60, cysteine 62, cysteine 75, and cysteine 78 each contribute to the Zn(2+) site. The Mg(2+) site is built by aspartate 627, aspartate 629, and aspartate 631. Zn(2+) is bound by residues cysteine 1017, cysteine 1097, cysteine 1104, and cysteine 1107. Disordered stretches follow at residues 1466–1490 (PADR…APPR) and 1522–1543 (AEEG…EENV).

Belongs to the RNA polymerase beta' chain family. In terms of assembly, the RNAP catalytic core consists of 2 alpha, 1 beta, 1 beta' and 1 omega subunit. When a sigma factor is associated with the core the holoenzyme is formed, which can initiate transcription. Mg(2+) serves as cofactor. Zn(2+) is required as a cofactor.

It catalyses the reaction RNA(n) + a ribonucleoside 5'-triphosphate = RNA(n+1) + diphosphate. In terms of biological role, DNA-dependent RNA polymerase catalyzes the transcription of DNA into RNA using the four ribonucleoside triphosphates as substrates. The polypeptide is DNA-directed RNA polymerase subunit beta' (Herpetosiphon aurantiacus (strain ATCC 23779 / DSM 785 / 114-95)).